The chain runs to 396 residues: Mannonate dehydratase (396 aa).

This sequence belongs to the mannonate dehydratase family. Fe(2+) is required as a cofactor. Mn(2+) serves as cofactor.

It carries out the reaction D-mannonate = 2-dehydro-3-deoxy-D-gluconate + H2O. The protein operates within carbohydrate metabolism; pentose and glucuronate interconversion. Its function is as follows. Catalyzes the dehydration of D-mannonate. This is Mannonate dehydratase from Serratia proteamaculans (strain 568).